A 148-amino-acid polypeptide reads, in one-letter code: Glutamyl-tRNA(Gln) amidotransferase subunit C, mitochondrial (148 aa).

Belongs to the GatC family. Subunit of the heterotrimeric GatCAB amidotransferase (AdT) complex, composed of A, B and C subunits.

It localises to the mitochondrion. The catalysed reaction is L-glutamyl-tRNA(Gln) + L-glutamine + ATP + H2O = L-glutaminyl-tRNA(Gln) + L-glutamate + ADP + phosphate + H(+). Its function is as follows. Allows the formation of correctly charged Gln-tRNA(Gln) through the transamidation of misacylated Glu-tRNA(Gln) in the mitochondria. The reaction takes place in the presence of glutamine and ATP through an activated gamma-phospho-Glu-tRNA(Gln). The protein is Glutamyl-tRNA(Gln) amidotransferase subunit C, mitochondrial of Drosophila melanogaster (Fruit fly).